A 320-amino-acid chain; its full sequence is N-acetylneuraminate lyase (320 aa).

The aceneuramate site is built by threonine 51 and threonine 52. Residue tyrosine 143 is the Proton donor of the active site. Lysine 173 serves as the catalytic Schiff-base intermediate with substrate. The aceneuramate site is built by serine 175, glycine 199, aspartate 201, glutamate 202, and serine 218.

Belongs to the DapA family. NanA subfamily. As to quaternary structure, homotetramer. As to expression, isoform 2 is expressed in placenta, liver, kidney, pancreas, spleen, thymus, ovary, small intestine and peripheral blood leukocyte.

It localises to the cytoplasm. It carries out the reaction aceneuramate = aldehydo-N-acetyl-D-mannosamine + pyruvate. It participates in amino-sugar metabolism; N-acetylneuraminate degradation. In terms of biological role, catalyzes the cleavage of N-acetylneuraminic acid (sialic acid) to form pyruvate and N-acetylmannosamine via a Schiff base intermediate. It prevents sialic acids from being recycled and returning to the cell surface. Involved in the N-glycolylneuraminic acid (Neu5Gc) degradation pathway. Although human is not able to catalyze formation of Neu5Gc due to the inactive CMAHP enzyme, Neu5Gc is present in food and must be degraded. The polypeptide is N-acetylneuraminate lyase (Homo sapiens (Human)).